A 190-amino-acid chain; its full sequence is Double zinc ribbon protein MJ0416 (190 aa).

The DZANK-type zinc finger occupies 134 to 183; the sequence is CPNCNNYISDSWKYCAHCGAKLKEEEEEVLRCPNCKRPVQPEWIVCPYCG.

The chain is Double zinc ribbon protein MJ0416 from Methanocaldococcus jannaschii (strain ATCC 43067 / DSM 2661 / JAL-1 / JCM 10045 / NBRC 100440) (Methanococcus jannaschii).